The sequence spans 88 residues: Large ribosomal subunit protein eL37 (88 aa).

Residues C17, C20, C32, and C35 each contribute to the Zn(2+) site. The C4-type zinc finger occupies 17–35 (CNRCGRRSFHVQKKTCSSC).

The protein belongs to the eukaryotic ribosomal protein eL37 family. The cofactor is Zn(2+).

In terms of biological role, binds to the 23S rRNA. The chain is Large ribosomal subunit protein eL37 (RPL37) from Candida albicans (Yeast).